We begin with the raw amino-acid sequence, 839 residues long: Lon protease (839 aa).

The 194-residue stretch at L31 to I224 folds into the Lon N-terminal domain. G377–T384 contributes to the ATP binding site. One can recognise a Lon proteolytic domain in the interval A613–E790. Catalysis depends on residues S696 and K739. The segment at I807–K839 is disordered. Low complexity predominate over residues K823–K832.

It belongs to the peptidase S16 family. As to quaternary structure, homohexamer. Organized in a ring with a central cavity.

The protein resides in the cytoplasm. It catalyses the reaction Hydrolysis of proteins in presence of ATP.. In terms of biological role, ATP-dependent serine protease that mediates the selective degradation of mutant and abnormal proteins as well as certain short-lived regulatory proteins. Required for cellular homeostasis and for survival from DNA damage and developmental changes induced by stress. Degrades polypeptides processively to yield small peptide fragments that are 5 to 10 amino acids long. Binds to DNA in a double-stranded, site-specific manner. This Leptospira interrogans serogroup Icterohaemorrhagiae serovar copenhageni (strain Fiocruz L1-130) protein is Lon protease.